Consider the following 211-residue polypeptide: Ras-related protein Rab-38 (211 aa).

Positions 19, 20, 21, 22, 23, 24, 35, 36, 38, and 41 each coordinate GTP. Mg(2+) is bound at residue Thr-23. A Switch 1 motif is present at residues 32-46; sequence QNFSSHYRATIGVDF. Residues Thr-41 and Asp-65 each contribute to the Mg(2+) site. GTP contacts are provided by Gly-68, Lys-128, Asp-130, Ala-160, and Lys-161. The Switch 2 signature appears at 68 to 81; the sequence is GQERFGNMTRVYYR. Cys-205 carries S-palmitoyl cysteine lipidation. The S-geranylgeranyl cysteine moiety is linked to residue Cys-208.

It belongs to the small GTPase superfamily. Rab family. Interacts with ANKRD27. The cofactor is Mg(2+). In terms of processing, although at least one in vitro system can process and methylate the prenylated C-terminal, in an in vitro system that normally express Rab-38 and in vivo the prenylated C-terminal is not proteolytically processed and not methylated. Expressed in melanocytes.

The protein resides in the cell membrane. Its subcellular location is the melanosome. The protein localises to the cytoplasmic vesicle. It is found in the phagosome. It localises to the phagosome membrane. The protein resides in the melanosome membrane. It catalyses the reaction GTP + H2O = GDP + phosphate + H(+). With respect to regulation, regulated by guanine nucleotide exchange factors (GEFs) including the BLOC-3 complex composed of HPS1 and HPS4 which promote the exchange of bound GDP for free GTP. Regulated by GTPase activating proteins (GAPs) including SGSM2 which increase the GTP hydrolysis activity. Inhibited by GDP dissociation inhibitors (GDIs). Its function is as follows. The small GTPases Rab are key regulators of intracellular membrane trafficking, from the formation of transport vesicles to their fusion with membranes. Rabs cycle between an inactive GDP-bound form and an active GTP-bound form that is able to recruit to membranes different sets of downstream effectors directly responsible for vesicle formation, movement, tethering and fusion. RAB38 may be involved in melanosomal transport and docking. Involved in the proper sorting of TYRP1. Involved in peripheral melanosomal distribution of TYRP1 in melanocytes; the function, which probably is implicating vesicle-trafficking, includes cooperation with ANKRD27 and VAMP7. Plays a role in the maturation of phagosomes that engulf pathogens, such as S.aureus and M.tuberculosis. Plays an important role in the control of melanin production and melanosome biogenesis. In concert with RAB32, regulates the proper trafficking of melanogenic enzymes TYR, TYRP1 and DCT/TYRP2 to melanosomes in melanocytes. In Homo sapiens (Human), this protein is Ras-related protein Rab-38.